We begin with the raw amino-acid sequence, 498 residues long: ATP synthase subunit beta, chloroplastic (498 aa).

172–179 contacts ATP; the sequence is GGAGVGKT.

The protein belongs to the ATPase alpha/beta chains family. As to quaternary structure, F-type ATPases have 2 components, CF(1) - the catalytic core - and CF(0) - the membrane proton channel. CF(1) has five subunits: alpha(3), beta(3), gamma(1), delta(1), epsilon(1). CF(0) has four main subunits: a(1), b(1), b'(1) and c(9-12).

The protein resides in the plastid. It localises to the chloroplast thylakoid membrane. It catalyses the reaction ATP + H2O + 4 H(+)(in) = ADP + phosphate + 5 H(+)(out). Functionally, produces ATP from ADP in the presence of a proton gradient across the membrane. The catalytic sites are hosted primarily by the beta subunits. The chain is ATP synthase subunit beta, chloroplastic from Hyophorbe lagenicaulis (Bottle palm).